We begin with the raw amino-acid sequence, 178 residues long: Crossover junction endodeoxyribonuclease RuvC (178 aa).

Active-site residues include aspartate 21, glutamate 81, and histidine 154. Mg(2+)-binding residues include aspartate 21, glutamate 81, and histidine 154.

It belongs to the RuvC family. As to quaternary structure, homodimer which binds Holliday junction (HJ) DNA. The HJ becomes 2-fold symmetrical on binding to RuvC with unstacked arms; it has a different conformation from HJ DNA in complex with RuvA. In the full resolvosome a probable DNA-RuvA(4)-RuvB(12)-RuvC(2) complex forms which resolves the HJ. Requires Mg(2+) as cofactor.

It is found in the cytoplasm. The catalysed reaction is Endonucleolytic cleavage at a junction such as a reciprocal single-stranded crossover between two homologous DNA duplexes (Holliday junction).. In terms of biological role, the RuvA-RuvB-RuvC complex processes Holliday junction (HJ) DNA during genetic recombination and DNA repair. Endonuclease that resolves HJ intermediates. Cleaves cruciform DNA by making single-stranded nicks across the HJ at symmetrical positions within the homologous arms, yielding a 5'-phosphate and a 3'-hydroxyl group; requires a central core of homology in the junction. The consensus cleavage sequence is 5'-(A/T)TT(C/G)-3'. Cleavage occurs on the 3'-side of the TT dinucleotide at the point of strand exchange. HJ branch migration catalyzed by RuvA-RuvB allows RuvC to scan DNA until it finds its consensus sequence, where it cleaves and resolves the cruciform DNA. This is Crossover junction endodeoxyribonuclease RuvC from Treponema denticola (strain ATCC 35405 / DSM 14222 / CIP 103919 / JCM 8153 / KCTC 15104).